Reading from the N-terminus, the 154-residue chain is MKIWIDADACPRVVKEIVSRASERLKVPVCLVANTDLSRAHTSLVTSVRVKAGFDVADDYIAENAEACDLVITADIPLAARVVEKGGVALDPRGELYTEENVGERLSYRNLMAELRTDGMLLGGPAQLGLTDRNRFASALDRLLTKMVREHRPQ.

Belongs to the UPF0178 family.

This is UPF0178 protein GM21_2006 from Geobacter sp. (strain M21).